The following is a 362-amino-acid chain: Peptide chain release factor 1 (362 aa).

Residue Q237 is modified to N5-methylglutamine.

Belongs to the prokaryotic/mitochondrial release factor family. In terms of processing, methylated by PrmC. Methylation increases the termination efficiency of RF1.

The protein resides in the cytoplasm. Its function is as follows. Peptide chain release factor 1 directs the termination of translation in response to the peptide chain termination codons UAG and UAA. In Vibrio atlanticus (strain LGP32) (Vibrio splendidus (strain Mel32)), this protein is Peptide chain release factor 1.